Consider the following 357-residue polypeptide: MSKSGKNGLTYSDAGVDIDAGNLLVEKIKPAVRSTRRPGADGEIGGFGGLFDLKAAGFTDPILVAANDGVGTKLKIAIDAGLHDTVGIDLVAMCVNDLVVQGAEPLLFLDYYATGKLDPNQGAAIVGGIAAGCREAGCALIGGETAEMPGMYSGGDYDLAGFAVGAAERGQLLPAGDIAEGDVILGLASSGVHSNGFSLVRKIVELAGLGWDAPAPFAEGATLGAALLTPTRIYVKPLLKAIRETKALKALAHITGGGFPENIPRVLPKHLAAEIDLASITVPTVFSWLSKTGGVAQNEMLRTFNCGVGMIVVVAAENADAVAAALEAEGETVARLGRMISREEGAPGTVYKGTLGL.

It belongs to the AIR synthase family.

Its subcellular location is the cytoplasm. It carries out the reaction 2-formamido-N(1)-(5-O-phospho-beta-D-ribosyl)acetamidine + ATP = 5-amino-1-(5-phospho-beta-D-ribosyl)imidazole + ADP + phosphate + H(+). It participates in purine metabolism; IMP biosynthesis via de novo pathway; 5-amino-1-(5-phospho-D-ribosyl)imidazole from N(2)-formyl-N(1)-(5-phospho-D-ribosyl)glycinamide: step 2/2. In Allorhizobium ampelinum (strain ATCC BAA-846 / DSM 112012 / S4) (Agrobacterium vitis (strain S4)), this protein is Phosphoribosylformylglycinamidine cyclo-ligase.